The following is a 506-amino-acid chain: MAQVINTNSLSLLTQNNLNKSQSALGTAIERLSSGLRINSAKDDAAGQAIANRFTANIKGLTQASRNANDGISIAQTTEGALNEINNNLQRVRELAVQSANSTNSQSDLDSIQAEITQRLNEIDRVSGQTQFNGVKVLAQDNTLTIQVGANDGETIDIDLKQINSQTLGLDSLNVQKAYDVKDTAVTTKAYANNGTTLDVSGLDDAAIKAATGGTNGTASVTGGAVKFDADNNKYFVTIGGFTGADAAKNGDYEVNVATDGTVTLAAGATKTTMPAGATTKTEVQELKDTPAVVSADAKNALIAGGVDATDANGAELVKMSYTDKNGKTIEGGYALKAGDKYYAADYDEATGAIKAKTTSYTAADGTTKTAANQLGGVDGKTEVVTIDGKTYNASKAAGHDFKAQPELAEAAAKTTENPLQKIDAALAQVDALRSDLGAVQNRFNSAITNLGNTVNNLSEARSRIEDSDYATEVSNMSRAQILQQAGTSVLAQANQVPQNVLSLLR.

Belongs to the bacterial flagellin family.

The protein localises to the secreted. It is found in the bacterial flagellum. In terms of biological role, flagellin is the subunit protein which polymerizes to form the filaments of bacterial flagella. The polypeptide is Phase 2 flagellin (fljB) (Salmonella typhimurium (strain LT2 / SGSC1412 / ATCC 700720)).